The sequence spans 160 residues: Nucleotide-binding protein Noc_2254 (160 aa).

Belongs to the YajQ family.

Its function is as follows. Nucleotide-binding protein. This is Nucleotide-binding protein Noc_2254 from Nitrosococcus oceani (strain ATCC 19707 / BCRC 17464 / JCM 30415 / NCIMB 11848 / C-107).